Here is a 1482-residue protein sequence, read N- to C-terminus: Cystic fibrosis transmembrane conductance regulator (1482 aa).

The Cytoplasmic portion of the chain corresponds to 1–77 (MQKSPLERAS…KLINALRRCF (77 aa)). The helical transmembrane segment at 78–98 (FWRFVFYGILLYLGEVTKAVQ) threads the bilayer. The 285-residue stretch at 81-365 (FVFYGILLYL…WAVQTWYDSL (285 aa)) folds into the ABC transmembrane type-1 1 domain. The Extracellular segment spans residues 99 to 122 (PLLLGRIIASYDPDNKVERSIAIY). Residues 123-146 (LAIGLCLLFIVRTLLLHPAIFGLH) form a helical membrane-spanning segment. At 147–195 (HMGMQMRIAMFSLIYKKTLKLSSRVLDKISIGQLVSLLSNNLNKFDEGL) the chain is on the cytoplasmic side. Residues 196-216 (ALAHFVWIAPLQVTLLMGLIW) traverse the membrane as a helical segment. The Extracellular segment spans residues 217–222 (DLLQAS). A helical membrane pass occupies residues 223–243 (AFCGLAFLIIVALGQAGLGRM). The Cytoplasmic segment spans residues 244 to 298 (MMKYRDKRAGKINERLVITSEMIENIQSVKAYCWEEAMEKMIENLRQIELRLTRK). A helical membrane pass occupies residues 299 to 319 (AAYVRYFNSAAFFFSGFFVVF). At 320-339 (LSVLPYAMLKGIILRKIFTT) the chain is on the extracellular side. Residues 340–358 (ISFCIVLRMAVTRQFPWAV) form a helical membrane-spanning segment. Topologically, residues 359 to 858 (QTWYDSLGAI…YLRYVTVHKS (500 aa)) are cytoplasmic. Residues Trp401, Ser434, 458–465 (GSTGAGKT), and Gln493 each bind ATP. Residues 423–646 (NGDNSLFFSN…RPDFSSELMG (224 aa)) enclose the ABC transporter 1 domain. Cys524 carries S-palmitoyl cysteine lipidation. Phosphoserine occurs at positions 549 and 660. Residues 654-831 (SAERRNSILT…EEINEEDLKE (178 aa)) form a disordered R region region. Ser670 is modified (phosphoserine; by PKA). At Ser685 the chain carries Phosphoserine. Lys687 participates in a covalent cross-link: Glycyl lysine isopeptide (Lys-Gly) (interchain with G-Cter in ubiquitin). Ser699 and Ser711 each carry phosphoserine. Thr716 carries the post-translational modification Phosphothreonine. Ser736, Ser767, Ser790, Ser795, and Ser813 each carry phosphoserine. A helical membrane pass occupies residues 859–879 (LIFVLIWCLVVFLAEVAVSLV). In terms of domain architecture, ABC transmembrane type-1 2 spans 859–1156 (LIFVLIWCLV…AVNSSIDVDS (298 aa)). Residues 880-919 (VLYLLRTSSLQDKGNNTTVNANSSYGVIVTNTSSYYLLYI) are Extracellular-facing. N-linked (GlcNAc...) asparagine glycosylation is found at Asn894, Asn895, Asn901, and Asn910. A discontinuously helical membrane pass occupies residues 920 to 940 (YVGIADSLFALAIFRGLPLVH). Residues 941-991 (TLIKVSKTLHHKMLRSILQAPMSTFNTLKAGRILNRFSKDIAILDDLLPLT) lie on the Cytoplasmic side of the membrane. A helical membrane pass occupies residues 992-1012 (MFDFIQLLLIVIGAVVVVSVL). Residues 1013–1014 (QP) lie on the Extracellular side of the membrane. Residues 1015–1035 (YIFLATVPVIAAFIILRAYFL) form a helical membrane-spanning segment. Residues 1036-1096 (HTSQQLKQLE…TANWFLYLST (61 aa)) are Cytoplasmic-facing. Residues 1097 to 1117 (LRWFQMRIEIIFVIFFIAVTF) traverse the membrane as a helical segment. The Extracellular portion of the chain corresponds to 1118–1131 (VSILTTGEGEGTIG). A helical membrane pass occupies residues 1132 to 1152 (IILTLAMNIMNTLQWAVNSSI). The Cytoplasmic segment spans residues 1153–1482 (DVDSLMRSVS…TEEEVQETRL (330 aa)). In terms of domain architecture, ABC transporter 2 spans 1212–1445 (MTVKDLTAKY…KSLFRQAISP (234 aa)). ATP contacts are provided by residues Tyr1221 and 1246 to 1253 (GRTGSGKS). An interaction with GORASP2 region spans residues 1388-1482 (RTLKQAFADC…TEEEVQETRL (95 aa)). The S-palmitoyl cysteine moiety is linked to residue Cys1397. Residues 1454 to 1463 (HRNSSRHRSR) are compositionally biased toward basic residues. The interval 1454–1482 (HRNSSRHRSRSQIAALKEETEEEVQETRL) is disordered. Ser1458 is subject to Phosphoserine. A compositionally biased stretch (acidic residues) spans 1472-1482 (ETEEEVQETRL). The PDZ-binding motif lies at 1480–1482 (TRL).

Belongs to the ABC transporter superfamily. ABCC family. CFTR transporter (TC 3.A.1.202) subfamily. Monomer; does not require oligomerization for channel activity. May form oligomers in the membrane. Interacts with SLC26A3, SLC26A6 and NHERF1. Interacts with SHANK2. Interacts with MYO6. Interacts (via C-terminus) with GOPC (via PDZ domain); this promotes CFTR internalization and thereby decreases channel activity. Interacts with SLC4A7 through NHERF1. Found in a complex with MYO5B and RAB11A. Interacts with ANO1. Interacts with SLC26A8. Interacts with AHCYL1; the interaction increases CFTR activity. Interacts with CSE1L. The core-glycosylated form interacts with GORASP2 (via PDZ GRASP-type 1 domain) in respone to ER stress. Interacts with MARCHF2; the interaction leads to CFTR ubiqtuitination and degradation. Interacts with ADGRG2. In terms of processing, N-glycosylated. Post-translationally, phosphorylated; cAMP treatment promotes phosphorylation and activates the channel. Dephosphorylation decreases the ATPase activity (in vitro). Phosphorylation at PKA sites activates the channel. Phosphorylation at PKC sites enhances the response to phosphorylation by PKA. Phosphorylated by AMPK; this inhibits channel activity. Ubiquitinated, leading to its degradation in the lysosome. Deubiquitination by USP10 in early endosomes enhances its endocytic recycling to the cell membrane. Ubiquitinated by RNF185 during ER stress. Ubiquitinated by MARCHF2.

The protein localises to the apical cell membrane. Its subcellular location is the early endosome membrane. The protein resides in the cell membrane. It is found in the recycling endosome membrane. It localises to the endoplasmic reticulum membrane. The protein localises to the nucleus. It catalyses the reaction ATP + H2O + closed Cl(-) channel = ADP + phosphate + open Cl(-) channel.. The catalysed reaction is chloride(in) = chloride(out). It carries out the reaction hydrogencarbonate(in) = hydrogencarbonate(out). The enzyme catalyses ATP + H2O = ADP + phosphate + H(+). In terms of biological role, epithelial ion channel that plays an important role in the regulation of epithelial ion and water transport and fluid homeostasis. Mediates the transport of chloride ions across the cell membrane. Possesses an intrinsic ATPase activity and utilizes ATP to gate its channel; the passive flow of anions through the channel is gated by cycles of ATP binding and hydrolysis by the ATP-binding domains. The ion channel is also permeable to HCO(3)(-); selectivity depends on the extracellular chloride concentration. Exerts its function also by modulating the activity of other ion channels and transporters. Contributes to the regulation of the pH and the ion content of the epithelial fluid layer. Modulates the activity of the epithelial sodium channel (ENaC) complex, in part by regulating the cell surface expression of the ENaC complex. May regulate bicarbonate secretion and salvage in epithelial cells by regulating the transporter SLC4A7. Can inhibit the chloride channel activity of ANO1. Plays a role in the chloride and bicarbonate homeostasis during sperm epididymal maturation and capacitation. This Loxodonta africana (African elephant) protein is Cystic fibrosis transmembrane conductance regulator.